Here is a 113-residue protein sequence, read N- to C-terminus: MSDINLPLSFSDAAAARVKMLIAEEENPALKLRVYITGGGCSGFQYGFTFDESVNEGDTTIENSGVTLVVDPMSLQYLIGGVVDYTEGLEGSRFFVNNPNATTTCGCGASFSV.

Residues cysteine 41, cysteine 105, and cysteine 107 each coordinate iron-sulfur cluster.

The protein belongs to the HesB/IscA family. In terms of assembly, homodimer. Iron-sulfur cluster is required as a cofactor.

Its function is as follows. Required for insertion of 4Fe-4S clusters for at least IspG. The polypeptide is Iron-sulfur cluster insertion protein ErpA (Vibrio vulnificus (strain CMCP6)).